A 74-amino-acid polypeptide reads, in one-letter code: WAP four-disulfide core domain protein 18 (74 aa).

The first 24 residues, 1–24 (MKTATVFVLVALIFMTMTTAWALS), serve as a signal peptide directing secretion. Positions 26–73 (PKEKPGACPKPPPRSFGTCDERCTGDGSCSGNMKCCSNGCGHACKPPV) constitute a WAP domain.

It localises to the secreted. Could have proteinase inhibiting capacity. The polypeptide is WAP four-disulfide core domain protein 18 (WFDC18) (Bos taurus (Bovine)).